The chain runs to 282 residues: MATSSSSYGIEQLQKGCYYEWMSVQAKHIVDLKEALMSHRSKEDHKLEELVGKIVNDFQKYTEKRSELSRRSCSSYFAPSWNSPLENGLLWMGGCRPSSFIRVIYSLCGSQAETQLSQYLLKIDENVEVNHGGSMSDLNASQLAKINDLHIKVIEKEDKITKKSANLQENVADMPIAIAAYATDLMNGDVVVEDALDKYEEGMAVLMVEADKLRFETLRKIVDVVTPVQAAEFLLAGKRLHISLHEWGRVREEQRFGCVRTDAAAATGGAGTEKSKRSSLLM.

The 244-residue stretch at 11–254 folds into the DOG1 domain; the sequence is EQLQKGCYYE…HEWGRVREEQ (244 aa).

This Arabidopsis thaliana (Mouse-ear cress) protein is Protein DOG1-like 3.